Consider the following 811-residue polypeptide: Glycerol-3-phosphate acyltransferase (811 aa).

Residues 303–308 carry the HXXXXD motif motif; it reads HRSHMD.

The protein belongs to the GPAT/DAPAT family.

The protein resides in the cell inner membrane. The enzyme catalyses sn-glycerol 3-phosphate + an acyl-CoA = a 1-acyl-sn-glycero-3-phosphate + CoA. It functions in the pathway phospholipid metabolism; CDP-diacylglycerol biosynthesis; CDP-diacylglycerol from sn-glycerol 3-phosphate: step 1/3. This is Glycerol-3-phosphate acyltransferase from Haemophilus ducreyi (strain 35000HP / ATCC 700724).